We begin with the raw amino-acid sequence, 616 residues long: Chaperone protein HscA homolog (616 aa).

The protein belongs to the heat shock protein 70 family.

Chaperone involved in the maturation of iron-sulfur cluster-containing proteins. Has a low intrinsic ATPase activity which is markedly stimulated by HscB. In Mannheimia succiniciproducens (strain KCTC 0769BP / MBEL55E), this protein is Chaperone protein HscA homolog.